The sequence spans 82 residues: Colonization factor (82 aa).

Positions 1-33 (MFSSLKNKLNTFKSTLSLGVFLLFSAFANQALA) are cleaved as a signal peptide.

Its subcellular location is the secreted. In Vibrio cholerae serotype O1 (strain ATCC 39315 / El Tor Inaba N16961), this protein is Colonization factor (cep).